A 429-amino-acid chain; its full sequence is Glutamate--tRNA ligase 1 (429 aa).

The 'HIGH' region motif lies at 6–16; the sequence is PSPTGDMHIGN. Positions 235 to 239 match the 'KMSKS' region motif; that stretch reads KMSKR. Residue Lys-238 participates in ATP binding.

This sequence belongs to the class-I aminoacyl-tRNA synthetase family. Glutamate--tRNA ligase type 1 subfamily. In terms of assembly, monomer.

It is found in the cytoplasm. The catalysed reaction is tRNA(Glu) + L-glutamate + ATP = L-glutamyl-tRNA(Glu) + AMP + diphosphate. In terms of biological role, catalyzes the attachment of glutamate to tRNA(Glu) in a two-step reaction: glutamate is first activated by ATP to form Glu-AMP and then transferred to the acceptor end of tRNA(Glu). This is Glutamate--tRNA ligase 1 from Campylobacter fetus subsp. fetus (strain 82-40).